Here is a 503-residue protein sequence, read N- to C-terminus: Protein DETOXIFICATION 36 (503 aa).

A run of 12 helical transmembrane segments spans residues 54–74 (LFHL…MSML), 87–107 (LAAA…LMLG), 137–157 (IVLV…KPLL), 166–186 (VASV…AYAV), 203–223 (SAYI…LSVF), 225–245 (FGWG…IIVL), 271–293 (GLWD…SWYS), 313–333 (LAIC…FNAA), 355–375 (AVTT…ILSW), 399–419 (FLAI…VAVG), 427–447 (AYVN…VLGF), and 456–476 (IWTG…IVTF).

Belongs to the multi antimicrobial extrusion (MATE) (TC 2.A.66.1) family.

It is found in the membrane. The protein is Protein DETOXIFICATION 36 of Arabidopsis thaliana (Mouse-ear cress).